Here is a 221-residue protein sequence, read N- to C-terminus: GTP cyclohydrolase 1 (221 aa).

Zn(2+) contacts are provided by C109, H112, and C180.

This sequence belongs to the GTP cyclohydrolase I family. In terms of assembly, toroid-shaped homodecamer, composed of two pentamers of five dimers.

The catalysed reaction is GTP + H2O = 7,8-dihydroneopterin 3'-triphosphate + formate + H(+). Its pathway is cofactor biosynthesis; 7,8-dihydroneopterin triphosphate biosynthesis; 7,8-dihydroneopterin triphosphate from GTP: step 1/1. The sequence is that of GTP cyclohydrolase 1 from Serratia proteamaculans (strain 568).